The primary structure comprises 297 residues: uncharacterized protein (297 aa).

This is an uncharacterized protein from Escherichia coli O157:H7.